The sequence spans 393 residues: Probable acetyl-CoA acyltransferase (393 aa).

C88 serves as the catalytic Acyl-thioester intermediate. Residues H349 and C378 each act as proton acceptor in the active site.

The protein belongs to the thiolase-like superfamily. Thiolase family.

It localises to the cytoplasm. It carries out the reaction 2 acetyl-CoA = acetoacetyl-CoA + CoA. This Staphylococcus aureus (strain COL) protein is Probable acetyl-CoA acyltransferase.